The sequence spans 420 residues: Glucose-1-phosphate adenylyltransferase (420 aa).

Residues Y107, G172, E187–K188, and S205 contribute to the alpha-D-glucose 1-phosphate site.

Belongs to the bacterial/plant glucose-1-phosphate adenylyltransferase family. In terms of assembly, homotetramer.

The catalysed reaction is alpha-D-glucose 1-phosphate + ATP + H(+) = ADP-alpha-D-glucose + diphosphate. The protein operates within glycan biosynthesis; glycogen biosynthesis. Functionally, involved in the biosynthesis of ADP-glucose, a building block required for the elongation reactions to produce glycogen. Catalyzes the reaction between ATP and alpha-D-glucose 1-phosphate (G1P) to produce pyrophosphate and ADP-Glc. This chain is Glucose-1-phosphate adenylyltransferase, found in Rhizobium rhizogenes (strain K84 / ATCC BAA-868) (Agrobacterium radiobacter).